The following is a 310-amino-acid chain: Glutaminase 1 (310 aa).

Residues Ser66, Asn117, Glu161, Asn168, Tyr192, Tyr244, and Val262 each contribute to the substrate site. Lys294 is subject to N6-acetyllysine.

This sequence belongs to the glutaminase family. In terms of assembly, homotetramer.

It catalyses the reaction L-glutamine + H2O = L-glutamate + NH4(+). The sequence is that of Glutaminase 1 from Escherichia coli O157:H7.